The primary structure comprises 327 residues: Biotin synthase (327 aa).

The region spanning F49–D273 is the Radical SAM core domain. Residues C67, C71, and C74 each coordinate [4Fe-4S] cluster. The [2Fe-2S] cluster site is built by S110, C142, C201, and R277.

The protein belongs to the radical SAM superfamily. Biotin synthase family. As to quaternary structure, homodimer. [4Fe-4S] cluster is required as a cofactor. Requires [2Fe-2S] cluster as cofactor.

The enzyme catalyses (4R,5S)-dethiobiotin + (sulfur carrier)-SH + 2 reduced [2Fe-2S]-[ferredoxin] + 2 S-adenosyl-L-methionine = (sulfur carrier)-H + biotin + 2 5'-deoxyadenosine + 2 L-methionine + 2 oxidized [2Fe-2S]-[ferredoxin]. The protein operates within cofactor biosynthesis; biotin biosynthesis; biotin from 7,8-diaminononanoate: step 2/2. Functionally, catalyzes the conversion of dethiobiotin (DTB) to biotin by the insertion of a sulfur atom into dethiobiotin via a radical-based mechanism. This Methanococcus maripaludis (strain C6 / ATCC BAA-1332) protein is Biotin synthase.